The following is a 296-amino-acid chain: MWRPAQGARWHVPAVLGYGGIPRRASWSNVESVANSRRRPVHPGQEVELDFAREWVEFYDPDNPEHLIAADLTWLLSRWACVFGTPACQGTVAGRPNDGCCSHGAFLSDDDDRTRLADAVHKLTDDDWQFRAKGLRRKGYLELDEHDGQPQHRTRKHKGACIFLNRPGFAGGAGCALHSKALKLGVPPLTMKPDVCWQLPIRRSQEWVTRPDGTEILKTTLTEYDRRGWGSGGADLHWYCTGDPAAHVGTKQVWQSLADELTELLGEKAYGELAAMCKRRSQLGLIAVHPATRAAQ.

Belongs to the Rv0495c family.

In terms of biological role, essential for maintaining intracellular redox homeostasis. The protein is Probable redox regulatory protein BQ2027_MB0506C of Mycobacterium bovis (strain ATCC BAA-935 / AF2122/97).